Here is a 694-residue protein sequence, read N- to C-terminus: Transcription activator of gluconeogenesis PTRG_06536 (694 aa).

Residues 1–57 (MTTPDAEDASPSPEYRSDQDDDMAAEQTTDRQSGDASPTQKPANGKPNAKDPLRPRR) form a disordered region. A DNA-binding region (zn(2)-C6 fungal-type) is located at residues 64–92 (CFACQRAHLTCGDERPCGRCIKRGLQDHC). Disordered regions lie at residues 175–216 (FSNQ…FGPL), 289–369 (AMAF…GDNP), 384–420 (AQRS…RDTK), and 539–569 (VNLG…SEGA). A compositionally biased stretch (polar residues) spans 193–204 (SVQNAGAPSTMS). A compositionally biased stretch (low complexity) spans 205–214 (QGQQGMQQFG). Over residues 302–324 (WQETQSRQGSMHVHTPNNTSGSG) the composition is skewed to polar residues. The span at 349–363 (ATHSTASPASTDAST) shows a compositional bias: low complexity. Polar residues predominate over residues 392–408 (RPQQENRPPTTALQSIH). Positions 485-559 (LQRHLMTLQE…SDTSTQNTTP (75 aa)) constitute a PAS domain.

The protein belongs to the ERT1/acuK family.

The protein localises to the nucleus. Functionally, transcription factor which regulates nonfermentable carbon utilization. Activator of gluconeogenetic genes. The sequence is that of Transcription activator of gluconeogenesis PTRG_06536 from Pyrenophora tritici-repentis (strain Pt-1C-BFP) (Wheat tan spot fungus).